The chain runs to 590 residues: Aspartate--tRNA(Asp/Asn) ligase (590 aa).

Glu-176 provides a ligand contact to L-aspartate. The interval 200 to 203 (QLFK) is aspartate. L-aspartate-binding residues include Arg-222 and His-451. 222 to 224 (RDE) serves as a coordination point for ATP. An ATP-binding site is contributed by Glu-485. Arg-492 is an L-aspartate binding site. Position 537–540 (537–540 (GIDR)) interacts with ATP.

It belongs to the class-II aminoacyl-tRNA synthetase family. Type 1 subfamily. Homodimer.

It localises to the cytoplasm. The catalysed reaction is tRNA(Asx) + L-aspartate + ATP = L-aspartyl-tRNA(Asx) + AMP + diphosphate. Aspartyl-tRNA synthetase with relaxed tRNA specificity since it is able to aspartylate not only its cognate tRNA(Asp) but also tRNA(Asn). Reaction proceeds in two steps: L-aspartate is first activated by ATP to form Asp-AMP and then transferred to the acceptor end of tRNA(Asp/Asn). In Ehrlichia ruminantium (strain Gardel), this protein is Aspartate--tRNA(Asp/Asn) ligase.